We begin with the raw amino-acid sequence, 396 residues long: uncharacterized protein (396 aa).

The protein belongs to the mycobacterial PPE family.

This is an uncharacterized protein from Mycobacterium tuberculosis (strain ATCC 25618 / H37Rv).